Consider the following 260-residue polypeptide: NAD kinase (260 aa).

D54 functions as the Proton acceptor in the catalytic mechanism. NAD(+) is bound by residues 54 to 55 (DG), 123 to 124 (ND), R150, D152, and 163 to 168 (TAYSLS).

The protein belongs to the NAD kinase family. The cofactor is a divalent metal cation.

Its subcellular location is the cytoplasm. The catalysed reaction is NAD(+) + ATP = ADP + NADP(+) + H(+). In terms of biological role, involved in the regulation of the intracellular balance of NAD and NADP, and is a key enzyme in the biosynthesis of NADP. Catalyzes specifically the phosphorylation on 2'-hydroxyl of the adenosine moiety of NAD to yield NADP. The protein is NAD kinase of Caldicellulosiruptor saccharolyticus (strain ATCC 43494 / DSM 8903 / Tp8T 6331).